Consider the following 609-residue polypeptide: Hemagglutinin glycoprotein (609 aa).

The Intravirion portion of the chain corresponds to 1–34 (MSPPRDRVDAYYKDNFQFKNTRVVLNKEQLLIER). The chain crosses the membrane as a helical; Signal-anchor for type II membrane protein span at residues 35-58 (PCMLLTVLFVMFLSLVGLLAIAGI). Over 59–609 (RLHRAAVNTA…VGIKITCNGK (551 aa)) the chain is Virion surface. 5 N-linked (GlcNAc...) asparagine; by host glycosylation sites follow: N168, N187, N200, N215, and N395.

Belongs to the paramyxoviruses hemagglutinin-neuraminidase family. Non-sialidase subfamily.

The protein resides in the virion membrane. It localises to the host membrane. Its function is as follows. Attaches the virus to cell receptors and thereby initiating infection. Binding of H protein to the receptor induces a conformational change that allows the F protein to trigger virion/cell membranes fusion. Down-regulates human MCP/CD46 cell surface expression. The polypeptide is Hemagglutinin glycoprotein (H) (Bos indicus (Zebu)).